The sequence spans 65 residues: Conotoxin Cal1.3 (65 aa).

An N-terminal signal peptide occupies residues 1-18; that stretch reads MRCLPVFIILLLLASTAA. A propeptide spanning residues 19-49 is cleaved from the precursor; that stretch reads VDVAGSKLKRRLERKPYQGSQAYVKKTAFGL. Disulfide bonds link C52/C62 and C53/C59. P61 carries the post-translational modification 4-hydroxyproline. Cysteine amide is present on C62.

It belongs to the conotoxin T superfamily. Expressed by the venom duct.

It is found in the secreted. Its function is as follows. Probable neurotoxin with unknown target. Possibly targets ion channels. This chain is Conotoxin Cal1.3, found in Californiconus californicus (California cone).